The sequence spans 344 residues: Phosphoribosylformylglycinamidine cyclo-ligase (344 aa).

Belongs to the AIR synthase family.

It is found in the cytoplasm. It carries out the reaction 2-formamido-N(1)-(5-O-phospho-beta-D-ribosyl)acetamidine + ATP = 5-amino-1-(5-phospho-beta-D-ribosyl)imidazole + ADP + phosphate + H(+). The protein operates within purine metabolism; IMP biosynthesis via de novo pathway; 5-amino-1-(5-phospho-D-ribosyl)imidazole from N(2)-formyl-N(1)-(5-phospho-D-ribosyl)glycinamide: step 2/2. The chain is Phosphoribosylformylglycinamidine cyclo-ligase from Neisseria gonorrhoeae (strain ATCC 700825 / FA 1090).